The sequence spans 745 residues: Arf-GAP with coiled-coil, ANK repeat and PH domain-containing protein 1 (745 aa).

The BAR domain maps to methionine 1–glutamine 226. The segment at methionine 1–leucine 382 is required for formation of endosomal tubules when overexpressed with PIP5K1C. In terms of domain architecture, PH spans glycine 265 to alanine 360. An Arf-GAP domain is found at glycine 405 to arginine 527. The required for interaction with GULP1 stretch occupies residues glycine 405–leucine 745. The segment at cysteine 420–cysteine 443 adopts a C4-type zinc-finger fold. Tyrosine 485 is subject to 3'-nitrotyrosine. The interval glutamate 525–leucine 567 is prevents interaction with ITGB1 when S-554 is not phosphorylated. The interval glutamate 525–serine 569 is disordered. Positions arginine 537 to proline 546 are enriched in pro residues. A Phosphoserine; by PKB modification is found at serine 555. 3 ANK repeats span residues glutamate 607–glutamine 640, glutamine 644–valine 673, and glutamate 677–alanine 707.

As to quaternary structure, banana-shaped homodimer laterally assembling into tetramers, the tetramers further pack helically onto the membrane. Interacts with GTP-bound ARF6. Interacts with third cytoplasmic loop of SLC2A4/GLUT4. Interacts with CLTC. Interacts with GULP1. Forms a complex with GDP-bound ARF6 and GULP1. Interacts with ITGB1; required for ITGB1 recycling. Phosphorylation at Ser-555 by PKB is required for interaction with ITGB1, export of ITGB1 from recycling endosomes to the cell surface and ITGB1-dependent cell migration.

Its subcellular location is the recycling endosome membrane. GAP activity stimulated by phosphatidylinositol 4,5-bisphosphate (PIP2) and phosphatidic acid. Its function is as follows. GTPase-activating protein (GAP) for ADP ribosylation factor 6 (ARF6) required for clathrin-dependent export of proteins from recycling endosomes to trans-Golgi network and cell surface. Required for regulated export of ITGB1 from recycling endosomes to the cell surface and ITGB1-dependent cell migration. The sequence is that of Arf-GAP with coiled-coil, ANK repeat and PH domain-containing protein 1 (ACAP1) from Bos taurus (Bovine).